Here is a 1034-residue protein sequence, read N- to C-terminus: Glycine dehydrogenase (decarboxylating), mitochondrial (1034 aa).

The N-terminal 63 residues, 1–63 (MERARRLAML…LNGFGSQVRT (63 aa)), are a transit peptide targeting the mitochondrion. An N6-(pyridoxal phosphate)lysine modification is found at K770.

It belongs to the GcvP family. In terms of assembly, homodimer. The glycine cleavage system is composed of four proteins: P, T, L and H. The cofactor is pyridoxal 5'-phosphate.

Its subcellular location is the mitochondrion. The catalysed reaction is N(6)-[(R)-lipoyl]-L-lysyl-[glycine-cleavage complex H protein] + glycine + H(+) = N(6)-[(R)-S(8)-aminomethyldihydrolipoyl]-L-lysyl-[glycine-cleavage complex H protein] + CO2. Its function is as follows. The glycine cleavage system catalyzes the degradation of glycine. The P protein binds the alpha-amino group of glycine through its pyridoxal phosphate cofactor; CO(2) is released and the remaining methylamine moiety is then transferred to the lipoamide cofactor of the H protein. This chain is Glycine dehydrogenase (decarboxylating), mitochondrial (GDCSPA), found in Flaveria trinervia (Clustered yellowtops).